A 306-amino-acid polypeptide reads, in one-letter code: UDP-3-O-acyl-N-acetylglucosamine deacetylase (306 aa).

Positions 78, 237, and 241 each coordinate Zn(2+). Residue histidine 264 is the Proton donor of the active site.

It belongs to the LpxC family. The cofactor is Zn(2+).

The catalysed reaction is a UDP-3-O-[(3R)-3-hydroxyacyl]-N-acetyl-alpha-D-glucosamine + H2O = a UDP-3-O-[(3R)-3-hydroxyacyl]-alpha-D-glucosamine + acetate. The protein operates within glycolipid biosynthesis; lipid IV(A) biosynthesis; lipid IV(A) from (3R)-3-hydroxytetradecanoyl-[acyl-carrier-protein] and UDP-N-acetyl-alpha-D-glucosamine: step 2/6. Functionally, catalyzes the hydrolysis of UDP-3-O-myristoyl-N-acetylglucosamine to form UDP-3-O-myristoylglucosamine and acetate, the committed step in lipid A biosynthesis. In Aromatoleum aromaticum (strain DSM 19018 / LMG 30748 / EbN1) (Azoarcus sp. (strain EbN1)), this protein is UDP-3-O-acyl-N-acetylglucosamine deacetylase.